A 199-amino-acid polypeptide reads, in one-letter code: MRKAAITRNTNETSIKVAVDLDGSGKYAVSTGVGFLDHMLEQLSRHSLMDLEVDAKGDLHIDAHHTTEDVGIAIGQAVNQALGDRKGICRYGSAYVPMDEALTRVALDLSNRPYLIWKVAFGRDKLGTMDTELFKEWFQAFAQAAGATLHVESLYGDNDHHIVESCFKALARALREAVEIDPRKADAVPSTKGTLGGSL.

The protein belongs to the imidazoleglycerol-phosphate dehydratase family.

It is found in the cytoplasm. The enzyme catalyses D-erythro-1-(imidazol-4-yl)glycerol 3-phosphate = 3-(imidazol-4-yl)-2-oxopropyl phosphate + H2O. It participates in amino-acid biosynthesis; L-histidine biosynthesis; L-histidine from 5-phospho-alpha-D-ribose 1-diphosphate: step 6/9. The protein is Imidazoleglycerol-phosphate dehydratase of Paramagnetospirillum magneticum (strain ATCC 700264 / AMB-1) (Magnetospirillum magneticum).